The sequence spans 183 residues: Nucleoside triphosphate pyrophosphatase (183 aa).

The active-site Proton acceptor is Asp-71.

It belongs to the Maf family. A divalent metal cation is required as a cofactor.

The protein resides in the cytoplasm. It catalyses the reaction a ribonucleoside 5'-triphosphate + H2O = a ribonucleoside 5'-phosphate + diphosphate + H(+). The catalysed reaction is a 2'-deoxyribonucleoside 5'-triphosphate + H2O = a 2'-deoxyribonucleoside 5'-phosphate + diphosphate + H(+). Nucleoside triphosphate pyrophosphatase. May have a dual role in cell division arrest and in preventing the incorporation of modified nucleotides into cellular nucleic acids. This is Nucleoside triphosphate pyrophosphatase from Campylobacter jejuni subsp. jejuni serotype O:6 (strain 81116 / NCTC 11828).